The chain runs to 513 residues: GMP synthase [glutamine-hydrolyzing] (513 aa).

In terms of domain architecture, Glutamine amidotransferase type-1 spans 8–198 (KIIVLDYGSQ…ALNICGAKGN (191 aa)). The Nucleophile role is filled by cysteine 85. Residues histidine 172 and glutamate 174 contribute to the active site. Residues 199-388 (WSMENFIDMQ…LGMPDEIVWR (190 aa)) enclose the GMPS ATP-PPase domain. 226–232 (SGGVDSS) serves as a coordination point for ATP.

As to quaternary structure, homodimer.

It catalyses the reaction XMP + L-glutamine + ATP + H2O = GMP + L-glutamate + AMP + diphosphate + 2 H(+). It participates in purine metabolism; GMP biosynthesis; GMP from XMP (L-Gln route): step 1/1. Catalyzes the synthesis of GMP from XMP. The sequence is that of GMP synthase [glutamine-hydrolyzing] (guaA) from Lactococcus lactis subsp. cremoris (strain MG1363).